The chain runs to 170 residues: Adenine phosphoribosyltransferase (170 aa).

Belongs to the purine/pyrimidine phosphoribosyltransferase family. Homodimer.

It is found in the cytoplasm. It catalyses the reaction AMP + diphosphate = 5-phospho-alpha-D-ribose 1-diphosphate + adenine. The protein operates within purine metabolism; AMP biosynthesis via salvage pathway; AMP from adenine: step 1/1. Its function is as follows. Catalyzes a salvage reaction resulting in the formation of AMP, that is energically less costly than de novo synthesis. The protein is Adenine phosphoribosyltransferase of Streptococcus sanguinis (strain SK36).